Consider the following 184-residue polypeptide: Translocon-associated protein subunit beta (184 aa).

An N-terminal signal peptide occupies residues 1 to 20 (MNFKTVISLFLVLFVSFVYC). At 21 to 147 (ENGAELLFHK…SQADYEKRTS (127 aa)) the chain is on the lumenal side. N-linked (GlcNAc...) asparagine glycosylation occurs at N94. The helical transmembrane segment at 148–168 (LLIKEWITFFVLCAGAIALPY) threads the bilayer. At 169–184 (SISTYYKKNYENGIKK) the chain is on the cytoplasmic side.

Belongs to the TRAP-beta family. In terms of assembly, heterotrimer of TRAP-alpha, TRAP-beta and TRAP-gamma.

Its subcellular location is the endoplasmic reticulum membrane. In terms of biological role, TRAP proteins are part of a complex whose function is to bind calcium to the ER membrane and thereby regulate the retention of ER resident proteins. In Dictyostelium discoideum (Social amoeba), this protein is Translocon-associated protein subunit beta (ssr2).